The sequence spans 122 residues: Small ribosomal subunit protein uS13 (122 aa).

The disordered stretch occupies residues 93 to 122 (RRGLPVRGQRTKTNARTRKGPKKTIAGKKK).

The protein belongs to the universal ribosomal protein uS13 family. Part of the 30S ribosomal subunit. Forms a loose heterodimer with protein S19. Forms two bridges to the 50S subunit in the 70S ribosome.

Its function is as follows. Located at the top of the head of the 30S subunit, it contacts several helices of the 16S rRNA. In the 70S ribosome it contacts the 23S rRNA (bridge B1a) and protein L5 of the 50S subunit (bridge B1b), connecting the 2 subunits; these bridges are implicated in subunit movement. Contacts the tRNAs in the A and P-sites. This chain is Small ribosomal subunit protein uS13, found in Corynebacterium urealyticum (strain ATCC 43042 / DSM 7109).